Consider the following 151-residue polypeptide: Metalloproteinase inhibitor 3 (151 aa).

An NTR domain is found at 1 to 108; sequence CNSDIVIRAK…GLNYRYHLGC (108 aa). Cystine bridges form between Cys1–Cys108, Cys115–Cys120, and Cys128–Cys149. The interval 53-54 is involved in metalloproteinase-binding; it reads ES. A mediates interaction with EFEMP1 region spans residues 71-151; that stretch reads GRVYDGKVYT…YQSKHYACIR (81 aa).

This sequence belongs to the protease inhibitor I35 (TIMP) family. In terms of assembly, interacts with EFEMP1.

The protein resides in the secreted. Its subcellular location is the extracellular space. It localises to the extracellular matrix. In terms of biological role, complexes with metalloproteinases (such as collagenases) and irreversibly inactivates them by binding to their catalytic zinc cofactor. May form part of a tissue-specific acute response to remodeling stimuli. In Oryctolagus cuniculus (Rabbit), this protein is Metalloproteinase inhibitor 3 (TIMP3).